Reading from the N-terminus, the 80-residue chain is Protein CEBPZOS (80 aa).

The helical transmembrane segment at 15–32 (GVLVAELVGVFGAYFLFS) threads the bilayer.

It is found in the mitochondrion membrane. The protein is Protein CEBPZOS of Homo sapiens (Human).